Consider the following 159-residue polypeptide: MSTNFFFAFESSEMILITLLFLGLFGRSNLVVSSSCILLCLKYFKLDQLVFPVLESRGLELGLVLLMLHILSPVATEKLTIKDLHSVTSLKGLFALAAGTLATKLNGDGLALMNARPEIIFGLTVGTVLGILFLRGTPCGPVMAAAVTAVFLQIASLFS.

4 consecutive transmembrane segments (helical) span residues 15-37 (ILIT…SSCI), 61-81 (LGLV…KLTI), 117-137 (PEII…LRGT), and 138-158 (PCGP…ASLF).

Belongs to the UPF0756 family.

The protein resides in the cell membrane. The chain is UPF0756 membrane protein PTH_1668 from Pelotomaculum thermopropionicum (strain DSM 13744 / JCM 10971 / SI).